The following is a 272-amino-acid chain: GATA zinc finger domain-containing protein 1 (272 aa).

The segment at 9-33 adopts a GATA-type zinc-finger fold; it reads CSVCKTTSSSMWKKGPQGEILCHHC. A disordered region spans residues 67–120; that stretch reads TFASTSAAPPQSNGGGGGKQSKQEIHRRSARLRNTKYKSAPAAEKKVSTKGKGR. At Lys-167 the chain carries N6-acetyllysine. A Glycyl lysine isopeptide (Lys-Gly) (interchain with G-Cter in SUMO2) cross-link involves residue Lys-265.

It localises to the nucleus. The sequence is that of GATA zinc finger domain-containing protein 1 (GATAD1) from Bos taurus (Bovine).